Consider the following 121-residue polypeptide: uncharacterized protein (121 aa).

Residues 11–31 form a helical membrane-spanning segment; that stretch reads IFQFFVFPFYYFLLIITEIGF.

It localises to the membrane. This is an uncharacterized protein from Schizosaccharomyces pombe (strain 972 / ATCC 24843) (Fission yeast).